Consider the following 348-residue polypeptide: Calcium/calmodulin-dependent protein kinase type 1 (348 aa).

The short motif at 7–22 (RDGSGPAPNATIREKY) is the Nuclear localization signal 1 element. The Protein kinase domain maps to 22-278 (YDFRDVLGTG…CQDALSHPWI (257 aa)). ATP contacts are provided by residues 28–36 (LGTGAFSKV) and lysine 52. Residues 71 to 78 (KVLRKLRH) carry the Nuclear localization signal 2 motif. Aspartate 144 serves as the catalytic Proton acceptor. Threonine 179 carries the phosphothreonine; by ckk-1 modification. The interval 278–318 (ISGNTAYTHDIHGTVAVHLKKSLAKRNWKKAYNAAAAIRQL) is autoinhibitory domain. Residues 288–294 (IHGTVAV) carry the Nuclear export sequence motif. Residues 297–307 (KKSLAKRNWKK) carry the Nuclear localization signal 3 motif. Residues 298–319 (KSLAKRNWKKAYNAAAAIRQLQ) are calmodulin-binding. Polar residues predominate over residues 327–338 (SNRLQKQASQQQ). Residues 327–348 (SNRLQKQASQQQPEPPTPAFHA) form a disordered region. Residues 339–348 (PEPPTPAFHA) are compositionally biased toward pro residues.

The protein belongs to the protein kinase superfamily. CAMK Ser/Thr protein kinase family. CaMK subfamily. Interacts with importin ima-3; affinity for ima-3 is increased in the presence of Ca(2+) and calmodulin and leads to increased nuclear accumulation of cmk-1 in FLP neurons upon prolonged heat activation. Mg(2+) serves as cofactor. Phosphorylation at Thr-179 can promote both nuclear export and import, sustaining nucleocytoplasmic shuttling. In terms of tissue distribution, expressed in head and tail neurons and vulval muscles. Throughout the nervous system. Detected in neurites and neuronal cell bodies. Expressed in the mechanosensory neurons, AVM and ALM, and in the interneurons, AVA, AVB and AVD. Expressed in the right and left ASE neurons where it functions cell-autonomously to control salt-avoidance learning. Expressed in FLP and AFD thermosensory neurons.

It is found in the nucleus. The protein resides in the cytoplasm. The enzyme catalyses L-seryl-[protein] + ATP = O-phospho-L-seryl-[protein] + ADP + H(+). It carries out the reaction L-threonyl-[protein] + ATP = O-phospho-L-threonyl-[protein] + ADP + H(+). Activated by Ca(2+)/calmodulin. Binding of calmodulin results in a conformational change that generates functional binding sites for both substrate and ATP, and thus relieves autoinhibition and lowers the Km of substrate binding. Must be phosphorylated by ckk-1 to be maximally active but this does not appear to be required for activity in AFD neurons. Functionally, calcium/calmodulin-dependent protein kinase that operates in the calcium-triggered CaMKK-CaMK1 signaling cascade which results in transcriptional activation. Transcriptional activation occurs at least in part through phosphorylation of crh-1. Regulates gene expression, sensory morphology, and function of the AFD thermosensory neurons. Involved in long-term adaptation of AFD neurons to temperatures warmer than the initial acclimatized cultivation temperature. Acts in the FLP thermal nociceptors to moderate the responsiveness to noxious heat and controls neuropeptide release from FLP neurons in response to temperature elevations. Regulates the dauer decision, the decision of the larvae to enter into the alternative stress-resistant and long-lived dauer developmental stage, based on the feeding state, primarily in the AWC sensory neurons. Acts non cell-autonomously in the AWC neurons to regulate expression of the daf-28 insulin-like peptide and cell-autonomously in the ASI sensory neurons to regulate expression of the growth promoting daf-7 in a food-regulated manner. Plays a role in memory-based thermal response of an individual AFD neuron cell. Influences habituation and sensitivity to repeated mechanosensory stimuli. Involved in chemotaxis response in AWC neurons to attractant 2-heptanone, a volatile organic compound emitted by the nematode pathogenic bacterium B.nematocida B16. Acts in the ASE salt-sensing neurons to promote a type of aversive gustatory-associated learning called salt-avoidance learning via regulation of crh-1 signaling and the promotion of long-term memory formation, but is not involved in salt attraction. Represses transcription of glutamate receptor glr-1 in the nucleus basally and in response to changes in synaptic activity. In Caenorhabditis elegans, this protein is Calcium/calmodulin-dependent protein kinase type 1.